The following is a 387-amino-acid chain: S-adenosylmethionine synthase (387 aa).

Histidine 19 contributes to the ATP binding site. Aspartate 21 is a Mg(2+) binding site. Glutamate 47 serves as a coordination point for K(+). Glutamine 103 provides a ligand contact to L-methionine. Residues 103 to 113 (QSPDIAQGVEL) form a flexible loop region. ATP is bound by residues 167 to 169 (DMK), 233 to 234 (RF), aspartate 242, 248 to 249 (RK), alanine 265, and lysine 269. Aspartate 242 serves as a coordination point for L-methionine. Lysine 273 lines the L-methionine pocket.

This sequence belongs to the AdoMet synthase family. Homotetramer; dimer of dimers. Mg(2+) is required as a cofactor. It depends on K(+) as a cofactor.

The protein resides in the cytoplasm. The enzyme catalyses L-methionine + ATP + H2O = S-adenosyl-L-methionine + phosphate + diphosphate. Its pathway is amino-acid biosynthesis; S-adenosyl-L-methionine biosynthesis; S-adenosyl-L-methionine from L-methionine: step 1/1. Its function is as follows. Catalyzes the formation of S-adenosylmethionine (AdoMet) from methionine and ATP. The overall synthetic reaction is composed of two sequential steps, AdoMet formation and the subsequent tripolyphosphate hydrolysis which occurs prior to release of AdoMet from the enzyme. The polypeptide is S-adenosylmethionine synthase (Mycoplasma mycoides subsp. mycoides SC (strain CCUG 32753 / NCTC 10114 / PG1)).